The primary structure comprises 905 residues: MISKIITSIFGSSNDRTLKRLKKRVVHINKLEAEFEKLSDQELQAKTAEFKQRLAEGATLDSLLHEAFATVREASRRVMGMRHFDVQLIGGMVLTNRNIAEMRTGEGKTLTATLPCYLNALMGKGVHVVTVNDYLARRDAETNRPLFEFLGMTVAVNIAGLASEVKREAYNADITYSTNSELGFDYLRDNLAHTKEERFQRELYYALVDEVDSILIDEARTPLIISGPAEDTTQIYQAIDTIIPHLISQDKEDSDEYTGEGDFTLDLKNKQAHLTERGMVKVEGILTEMGLMQEGETLYHPARIALLHHVYAALRAHKLFEVDVDYIVKDGEVVIIDEHTGRTMAGRRWSDGLHQAIEAKEHVNIQGENQTVASITYQNYFRLYEKLAGMTGTADTEAFEFQQIYGLDTVVIPTNKPVIRDDRTDLMFKSEQEKFAAIIKGIEECMSRQQPVLVGTASVEKSELLSNALTKAGIKHNVLNAKFHAQEAEIVAEAGAPSAVTIATNMAGRGTDIVLGGNWKAELAKLDNPTEAEIEAIKSAWKTRYDTVMQAGGLHIIGTERHESRRIDNQLRGRSGRQGDPGSSRFYLSLDDTLMRIYLNEGKLNMMRKAFSEEGEAMESKLLTKVIASAQAKVEAHNFEGRKNLLQYDDVANEQRKAIYEQRNYLLETNDISAMIETIRDDVFNHVISRYIPPQSIEEMWDIAGLEEVLHHQFGMELPIQQWLEKEKDLHEETLRERIINLAKQEYQSKEEKVGAEVMRNFEKGVMLQNLDELWKEHLSAMDYLRKGIHLRGYAQKDPKQEYKKESFEMFTNMLELLKSNVISILSRIQVRSQQEIEEAQRQQHEQAEAESANYQATTEEALAKEKRDALPAELTNLQIGRNDPCPCGSGKKYKHCHGSKARYV.

ATP-binding positions include Gln-87, Gly-105–Thr-109, and Asp-512. The interval Arg-565 to Ser-584 is disordered. Residues Cys-886, Cys-888, Cys-897, and His-898 each contribute to the Zn(2+) site.

Belongs to the SecA family. Monomer and homodimer. Part of the essential Sec protein translocation apparatus which comprises SecA, SecYEG and auxiliary proteins SecDF-YajC and YidC. Zn(2+) serves as cofactor.

The protein resides in the cell inner membrane. It localises to the cytoplasm. It carries out the reaction ATP + H2O + cellular proteinSide 1 = ADP + phosphate + cellular proteinSide 2.. In terms of biological role, part of the Sec protein translocase complex. Interacts with the SecYEG preprotein conducting channel. Has a central role in coupling the hydrolysis of ATP to the transfer of proteins into and across the cell membrane, serving both as a receptor for the preprotein-SecB complex and as an ATP-driven molecular motor driving the stepwise translocation of polypeptide chains across the membrane. This chain is Protein translocase subunit SecA, found in Haemophilus ducreyi (strain 35000HP / ATCC 700724).